A 505-amino-acid chain; its full sequence is Flagellin (505 aa).

The protein belongs to the bacterial flagellin family.

The protein resides in the secreted. It is found in the bacterial flagellum. Its function is as follows. Flagellin is the subunit protein which polymerizes to form the filaments of bacterial flagella. The chain is Flagellin (fliC) from Salmonella montevideo.